Here is a 2472-residue protein sequence, read N- to C-terminus: Telomere-associated protein RIF1 (2472 aa).

Residues 1 to 25 form a disordered region; the sequence is MTARGQSPLAPLLETLEDPSASHGG. Serine 402 carries the post-translational modification Phosphoserine. Threonine 409 is modified (phosphothreonine). A phosphoserine mark is found at serine 782, serine 979, and serine 1008. Residue threonine 1047 is modified to Phosphothreonine. Residues 1145–1192 form a disordered region; it reads LEKSSLSNNECGSLDKTSPEMSNSNNDERKKALISSRKTSTECASSTE. Polar residues predominate over residues 1148 to 1169; it reads SSLSNNECGSLDKTSPEMSNSN. Serine 1162 is modified (phosphoserine). Threonine 1220 carries the post-translational modification Phosphothreonine. Phosphoserine is present on residues serine 1236 and serine 1238. Basic and acidic residues-rich tracts occupy residues 1265–1279 and 1306–1315; these read AKQREGTFSKSDSEK and MRSEPEKNTE. 3 disordered regions span residues 1265 to 1318, 1398 to 1464, and 1479 to 1587; these read AKQR…EESV, MVNE…DVLP, and IEKG…DQEE. The segment covering 1400-1412 has biased composition (polar residues); that stretch reads NEDSQVQITPNQK. 3 positions are modified to phosphoserine: serine 1422, serine 1454, and serine 1513. Basic and acidic residues-rich tracts occupy residues 1431–1464 and 1500–1530; these read SQDKENSHQKKERRKEEEKPLQKSPLHIKDDVLP and EQNKKKADPENIKSEGDGTQDIVDKSSEKLV. Threonine 1518 is modified (phosphothreonine). Serine 1542, serine 1552, serine 1554, serine 1556, and serine 1564 each carry phosphoserine. Basic residues predominate over residues 1565-1574; that stretch reads RKKRSGKWKN. Phosphoserine is present on residues serine 1576, serine 1579, serine 1613, serine 1616, serine 1688, serine 1693, serine 1706, and serine 1709. The interval 1762 to 1782 is disordered; the sequence is TKKADVQAPVSPSETSQANPY. Polar residues predominate over residues 1771 to 1782; it reads VSPSETSQANPY. Threonine 1806 carries the post-translational modification Phosphothreonine. At serine 1810 the chain carries Phosphoserine. The span at 1846–1859 shows a compositional bias: polar residues; the sequence is AMSLESQESPNENF. The interval 1846–1889 is disordered; sequence AMSLESQESPNENFKTVGPCLGDSKNVSQESLETKEEKPEETPK. Serine 1873 and serine 1876 each carry phosphoserine. Over residues 1877-1889 the composition is skewed to basic and acidic residues; it reads LETKEEKPEETPK. Positions 1924–2472 are interaction with condensed chromosomes in telophase; the sequence is EASFHGQERT…WRSPSHENSI (549 aa). 2 positions are modified to phosphoserine: serine 1926 and serine 1971. Positions 1992 to 2021 are disordered; sequence EQTAAGELDGGNDVSDLHSSEETNTKMKNN. Over residues 2006 to 2021 the composition is skewed to basic and acidic residues; the sequence is SDLHSSEETNTKMKNN. A phosphoserine mark is found at serine 2144 and serine 2161. The residue at position 2167 (threonine 2167) is a Phosphothreonine. The segment at 2170-2446 is interaction with ERCC6; that stretch reads VWSPLASPST…SGSQLFEMHE (277 aa). Serine 2172, serine 2176, serine 2195, serine 2196, and serine 2205 each carry phosphoserine. Residues 2227–2255 are compositionally biased toward polar residues; sequence RSHSSNSSPIGKSVKTSPTTQSKHNTTSA. Residues 2227-2269 form a disordered region; sequence RSHSSNSSPIGKSVKTSPTTQSKHNTTSAKGFLSPGSRSPKFK. Phosphoserine occurs at positions 2260, 2339, 2391, 2393, 2465, and 2471.

This sequence belongs to the RIF1 family. As to quaternary structure, interacts with TP53BP1 (when phosphorylated by ATM). May interact with TRF2. Interacts with SHLD2. Interacts with ERCC6 (via WHD region). Interacts with ASTE1. In terms of tissue distribution, highly expressed in testis.

The protein localises to the nucleus. It is found in the chromosome. Its subcellular location is the telomere. The protein resides in the cytoplasm. It localises to the cytoskeleton. The protein localises to the spindle. In terms of biological role, key regulator of TP53BP1 that plays a key role in the repair of double-strand DNA breaks (DSBs) in response to DNA damage: acts by promoting non-homologous end joining (NHEJ)-mediated repair of DSBs. In response to DNA damage, interacts with ATM-phosphorylated TP53BP1. Interaction with TP53BP1 leads to dissociate the interaction between NUDT16L1/TIRR and TP53BP1, thereby unmasking the tandem Tudor-like domain of TP53BP1 and allowing recruitment to DNA DSBs. Once recruited to DSBs, RIF1 and TP53BP1 act by promoting NHEJ-mediated repair of DSBs. In the same time, RIF1 and TP53BP1 specifically counteract the function of BRCA1 by blocking DSBs resection via homologous recombination (HR) during G1 phase. Also required for immunoglobulin class-switch recombination (CSR) during antibody genesis, a process that involves the generation of DNA DSBs. Promotes NHEJ of dysfunctional telomeres. The protein is Telomere-associated protein RIF1 of Homo sapiens (Human).